We begin with the raw amino-acid sequence, 510 residues long: GMP synthase [glutamine-hydrolyzing] (510 aa).

One can recognise a Glutamine amidotransferase type-1 domain in the interval 5–195 (LVIVLDFGGQ…LFNIADLSAD (191 aa)). Cysteine 82 serves as the catalytic Nucleophile. Catalysis depends on residues histidine 169 and glutamate 171. The region spanning 196-385 (WTMGSYIEET…LGLHREIVER (190 aa)) is the GMPS ATP-PPase domain. 223–229 (SGGIDST) is an ATP binding site.

As to quaternary structure, homodimer.

It catalyses the reaction XMP + L-glutamine + ATP + H2O = GMP + L-glutamate + AMP + diphosphate + 2 H(+). The protein operates within purine metabolism; GMP biosynthesis; GMP from XMP (L-Gln route): step 1/1. In terms of biological role, catalyzes the synthesis of GMP from XMP. In Natranaerobius thermophilus (strain ATCC BAA-1301 / DSM 18059 / JW/NM-WN-LF), this protein is GMP synthase [glutamine-hydrolyzing].